A 209-amino-acid chain; its full sequence is Uracil phosphoribosyltransferase (209 aa).

5-phospho-alpha-D-ribose 1-diphosphate contacts are provided by residues arginine 79, arginine 104, and 131 to 139 (DPMLATGGS). Residues isoleucine 194 and 199-201 (GDA) each bind uracil. Position 200 (aspartate 200) interacts with 5-phospho-alpha-D-ribose 1-diphosphate.

It belongs to the UPRTase family. Mg(2+) serves as cofactor.

The catalysed reaction is UMP + diphosphate = 5-phospho-alpha-D-ribose 1-diphosphate + uracil. Its pathway is pyrimidine metabolism; UMP biosynthesis via salvage pathway; UMP from uracil: step 1/1. With respect to regulation, allosterically activated by GTP. Functionally, catalyzes the conversion of uracil and 5-phospho-alpha-D-ribose 1-diphosphate (PRPP) to UMP and diphosphate. The protein is Uracil phosphoribosyltransferase of Bacillus pumilus (strain SAFR-032).